Here is a 430-residue protein sequence, read N- to C-terminus: Septin-14 (430 aa).

Residues 48-313 form the Septin-type G domain; the sequence is KGFSFNILCV…ECYRSNRLQK (266 aa). The G1 motif stretch occupies residues 58 to 65; that stretch reads GETGIGKT. Residues 58–65, G113, 194–202, G246, and R261 contribute to the GTP site; these read GETGIGKT and KADSLSKND. Residues 110-113 are G3 motif; that stretch reads KTVG. The tract at residues 193 to 196 is G4 motif; it reads AKAD. The stretch at 329–410 forms a coiled coil; sequence QEMYEAKRRE…IIDFYKMKAA (82 aa). The interval 367 to 430 is required for interaction with SEPTIN4. Required for migration of cortical neurons during corticogenesis; sequence DAEKELQDKF…NIKKDKDRKK (64 aa).

Belongs to the TRAFAC class TrmE-Era-EngA-EngB-Septin-like GTPase superfamily. Septin GTPase family. In terms of assembly, septins polymerize into heterooligomeric protein complexes that form filaments, and can associate with cellular membranes, actin filaments and microtubules. GTPase activity is required for filament formation. Interacts with ACTN4. Interacts with SEPTIN9. Interacts (via C-terminus) with SEPTIN4. Expressed in the testis and brain including the cerebrum, hippocampus and cerebellum (at protein level).

It localises to the cytoplasm. The protein resides in the cytoskeleton. The protein localises to the cell projection. Its subcellular location is the axon. It is found in the dendrite. It localises to the perikaryon. The protein resides in the perinuclear region. The protein localises to the cytoplasmic vesicle. Its subcellular location is the secretory vesicle. It is found in the acrosome. Filament-forming cytoskeletal GTPase. Involved in the migration of cortical neurons and the formation of neuron leading processes during embryonic development. Plays a role in sperm head formation during spermiogenesis, potentially via facilitating localization of ACTN4 to cell filaments. In Mus musculus (Mouse), this protein is Septin-14.